A 143-amino-acid chain; its full sequence is Large ribosomal subunit protein uL11 (143 aa).

It belongs to the universal ribosomal protein uL11 family. As to quaternary structure, part of the ribosomal stalk of the 50S ribosomal subunit. Interacts with L10 and the large rRNA to form the base of the stalk. L10 forms an elongated spine to which L12 dimers bind in a sequential fashion forming a multimeric L10(L12)X complex. In terms of processing, one or more lysine residues are methylated.

Functionally, forms part of the ribosomal stalk which helps the ribosome interact with GTP-bound translation factors. In Marinobacter nauticus (strain ATCC 700491 / DSM 11845 / VT8) (Marinobacter aquaeolei), this protein is Large ribosomal subunit protein uL11.